Consider the following 1196-residue polypeptide: MPTAESEAKVKTKVRFEELLKTHSDLMREKKKLKKKLVRSEENISPDTIRSNLHYMKETTSDDPDTIRSNLPHIKETTSDDVSAANTNNLKKSTRVTKNKLRNTQLATENPNGDASVEEDKQGKPNKKVIKTVPQLTTQDLKPETPENKVDSTHQKTHTKPQPGVDHQKSEKANEGREETDLEEDEELMQAYQCHVTEEMAKEIKRKIRKKLKEQLTYFPSDTLFHDDKLSSEKRKKKKEVPVFSKAETSTLTISGDTVEGEQKKESSVRSVSSDSHQDDEISSMEQSTEDSMQDDTKPKPKKTKKKTKAVADNNEDVDGDGVHEITSRDSPVYPKCLLDDDLVLGVYIHRTDRLKSDFMISHPMVKIHVVDEHTGQYVKKDDSGRPVSSYYEKENVDYILPIMTQPYDFKQLKSRLPEWEEQIVFNENFPYLLRGSDESPKVILFFEILDFLSVDEIKNNSEVQNQECGFRKIAWAFLKLLGANGNANINSKLRLQLYYPPTKPRSPLSVVEAFEWWSKCPRNHYPSTLYVTVRGLKVPDCIKPSYRSMMALQEEKGKPVHCERHHESSSVDTEPGLEESKEVIKWKRLPGQACRIPNKHLFSLNAGERGCFCLDFSHNGRILAAACASRDGYPIILYEIPSGRFMRELCGHLNIIYDLSWSKDDHYILTSSSDGTARIWKNEINNTNTFRVLPHPSFVYTAKFHPAVRELVVTGCYDSMIRIWKVEMREDSAILVRQFDVHKSFINSLCFDTEGHHMYSGDCTGVIVVWNTYVKINDLEHSVHHWTINKEIKETEFKGIPISYLEIHPNGKRLLIHTKDSTLRIMDLRILVARKFVGAANYREKIHSTLTPCGTFLFAGSEDGIVYVWNPETGEQVAMYSDLPFKSPIRDISYHPFENMVAFCAFGQNEPILLYIYDFHVAQQEAEMFKRYNGTFPLPGIHQSQDALCTCPKLPHQGSFQIDEFVHTESSSTKMQLVKQRLETVTEVIRSCAAKVNKNLSFTSPPAVSSQQSKLKQSNMLTAQEILHQFGFTQTGIISIERKPCNHQVDTAPTVVALYDYTANRSDELTIHRGDIIRVFFKDNEDWWYGSIGKGQEGYFPANHVASETLYQELPPEIKERSPPLSPEEKTKIEKSPAPQKQSINKNKSQDFRLGSESMTHSEMRKEQSHEDQGHIMDTRMRKNKQAGRKVTLIE.

A coiled-coil region spans residues 13–45 (KVRFEELLKTHSDLMREKKKLKKKLVRSEENIS). A Phosphoserine modification is found at S45. Disordered regions lie at residues 56–186 (MKET…EEDE), 215–242 (QLTYFPSDTLFHDDKLSSEKRKKKKEVP), and 254–327 (ISGD…HEIT). The segment covering 80 to 91 (DDVSAANTNNLK) has biased composition (polar residues). Over residues 92–101 (KSTRVTKNKL) the composition is skewed to basic residues. Positions 102 to 113 (RNTQLATENPNG) are enriched in polar residues. Basic and acidic residues-rich tracts occupy residues 141 to 154 (LKPETPENKVDSTH), 166 to 179 (DHQKSEKANEGREE), and 224 to 233 (LFHDDKLSSE). Positions 141-434 (LKPETPENKV…VFNENFPYLL (294 aa)) are interaction with HAP1. The segment covering 300–309 (KPKKTKKKTK) has biased composition (basic residues). WD repeat units lie at residues 607–649 (AGER…FMRE), 652–691 (GHLNIIYDLSWSKDDHYILTSSSDGTARIWKNEINNTNTF), 695–735 (PHPS…DSAI), 742–781 (VHKSFINSLCFDTEGHHMYSGDCTGVIVVWNTYVKINDLE), 797–837 (EFKG…ARKF), 841–880 (ANYREKIHSTLTPCGTFLFAGSEDGIVYVWNPETGEQVAM), and 885–926 (PFKS…AQQE). Residue S1002 is modified to Phosphoserine. One can recognise an SH3 domain in the interval 1051 to 1111 (DTAPTVVALY…PANHVASETL (61 aa)). Residues 1115-1196 (LPPEIKERSP…QAGRKVTLIE (82 aa)) are disordered. Composition is skewed to basic and acidic residues over residues 1117-1136 (PEIKERSPPLSPEEKTKIEK) and 1161-1182 (THSEMRKEQSHEDQGHIMDTRM). S1123 is subject to Phosphoserine.

In terms of assembly, self-associates. Part of the tectonic-like complex (also named B9 complex). Interacts with MKS1. Interacts with NPHP1; probably as heterodimers and/or AHI1(2):NPHP1(2) heterotetramers. Interacts (via SH3 domain) with the dynamin GTPase DNM2. Interacts with HAP1; probably as AHI1(2):HAP1(2) heterotetramers. Interacts with RAB8A. Interacts with CEND1. Interacts with CTNNB1/beta-catenin. Interacts with SPATA7. As to expression, highly expressed in the most primitive normal hematopoietic cells. Expressed in brain, particularly in neurons that give rise to the crossing axons of the corticospinal tract and superior cerebellar peduncles. Expressed in kidney (renal collecting duct cells) (at protein level).

The protein localises to the cytoplasm. Its subcellular location is the cytoskeleton. It localises to the cilium basal body. It is found in the cell junction. The protein resides in the adherens junction. The protein localises to the microtubule organizing center. Its subcellular location is the centrosome. It localises to the centriole. Functionally, involved in vesicle trafficking and required for ciliogenesis, formation of primary non-motile cilium, and recruitment of RAB8A to the basal body of primary cilium. Component of the tectonic-like complex, a complex localized at the transition zone of primary cilia and acting as a barrier that prevents diffusion of transmembrane proteins between the cilia and plasma membranes. Involved in neuronal differentiation. As a positive modulator of classical Wnt signaling, may play a crucial role in ciliary signaling during cerebellum embryonic development. The chain is Jouberin (AHI1) from Homo sapiens (Human).